The primary structure comprises 1235 residues: High-affinity potassium transport protein (1235 aa).

A Phosphoserine modification is found at serine 15. Helical transmembrane passes span 49–70 (SFIA…ILLY) and 78–98 (IDTL…TVDI). Asparagine 100 is a glycosylation site (N-linked (GlcNAc...) asparagine). A helical membrane pass occupies residues 107–127 (IVLYIVCCISTPIAVHSCLAF). Disordered stretches follow at residues 161–310 (LTAR…SPAD), 323–344 (EATA…GTRY), 361–441 (KIKI…TKPP), and 488–565 (RLST…HQLQ). The span at 164–179 (RTMTKNRTGTQRTSYP) shows a compositional bias: polar residues. N-linked (GlcNAc...) asparagine glycosylation is present at asparagine 169. Positions 198-217 (VNRDEQDSVHSDQNSHDISR) are enriched in basic and acidic residues. Positions 219–232 (SSNNNTNHNGSSGS) are enriched in low complexity. Residues asparagine 222 and asparagine 227 are each glycosylated (N-linked (GlcNAc...) asparagine). Acidic residues predominate over residues 237 to 247 (VKEDETDDNGE). A compositionally biased stretch (polar residues) spans 248 to 274 (YQENNSYSTVGSSSNTVADESLNQKPK). Residue asparagine 251 is glycosylated (N-linked (GlcNAc...) asparagine). 2 N-linked (GlcNAc...) asparagine glycosylation sites follow: asparagine 369 and asparagine 383. Composition is skewed to polar residues over residues 370 to 415 (ESNT…SNSG) and 490 to 502 (STGS…SNNV). Serine 414 bears the Phosphoserine mark. N-linked (GlcNAc...) asparagine glycosylation is found at asparagine 497, asparagine 501, and asparagine 532. The span at 510 to 539 (DMDDDDDDDDNDGDNNEEYFADNESGDEDE) shows a compositional bias: acidic residues. The residue at position 534 (serine 534) is a Phosphoserine. The segment covering 540–563 (RVQQSEPHSDSELKSHQQQQEKHQ) has biased composition (basic and acidic residues). N-linked (GlcNAc...) asparagine glycans are attached at residues asparagine 580 and asparagine 677. The disordered stretch occupies residues 671–706 (HDGSHKNGSEEASSDSNENIYSTNGGSDHNGLNNYP). A compositionally biased stretch (polar residues) spans 680–706 (EEASSDSNENIYSTNGGSDHNGLNNYP). 5 helical membrane passes run 778-800 (ILVV…WIIL), 813-834 (VSPT…GLTL), 838-858 (SMMS…FIII), 862-882 (GFPI…PDLS), and 898-918 (CFTL…LAGL). Asparagine 919 is a glycosylation site (N-linked (GlcNAc...) asparagine). Helical transmembrane passes span 923 to 943 (WILF…SKGY) and 971 to 991 (SIQV…AISI). The disordered stretch occupies residues 1003–1063 (GLYGDMGGEP…KKKKKTENPN (61 aa)). The span at 1010–1031 (GEPEDTDTEDDGNDEDDDEENE) shows a compositional bias: acidic residues. Residue asparagine 1030 is glycosylated (N-linked (GlcNAc...) asparagine). Residues 1036–1049 (QSSQRSSSNNNNNN) are compositionally biased toward low complexity. 2 helical membrane passes run 1078-1098 (QLSF…ICEG) and 1111-1131 (IFAI…SLGY). A glycan (N-linked (GlcNAc...) asparagine) is linked at asparagine 1135.

This sequence belongs to the TrkH potassium transport family.

It is found in the membrane. Its function is as follows. This protein is required for high-affinity potassium transport. The chain is High-affinity potassium transport protein (TRK1) from Saccharomyces cerevisiae (strain ATCC 204508 / S288c) (Baker's yeast).